The sequence spans 331 residues: Ketol-acid reductoisomerase (NADP(+)) (331 aa).

A KARI N-terminal Rossmann domain is found at 2 to 182 (AKMYYDSDCN…GAGRAGILET (181 aa)). Residues 25 to 28 (YGSQ), Ser-51, and 83 to 86 (DEKQ) each bind NADP(+). His-108 is a catalytic residue. Position 134 (Gly-134) interacts with NADP(+). In terms of domain architecture, KARI C-terminal knotted spans 183 to 329 (TFREETETDL…AELRKMMSWL (147 aa)). Mg(2+) contacts are provided by Asp-191, Glu-195, Glu-227, and Glu-231. Ser-252 serves as a coordination point for substrate.

This sequence belongs to the ketol-acid reductoisomerase family. Mg(2+) serves as cofactor.

The enzyme catalyses (2R)-2,3-dihydroxy-3-methylbutanoate + NADP(+) = (2S)-2-acetolactate + NADPH + H(+). The catalysed reaction is (2R,3R)-2,3-dihydroxy-3-methylpentanoate + NADP(+) = (S)-2-ethyl-2-hydroxy-3-oxobutanoate + NADPH + H(+). Its pathway is amino-acid biosynthesis; L-isoleucine biosynthesis; L-isoleucine from 2-oxobutanoate: step 2/4. It participates in amino-acid biosynthesis; L-valine biosynthesis; L-valine from pyruvate: step 2/4. Its function is as follows. Involved in the biosynthesis of branched-chain amino acids (BCAA). Catalyzes an alkyl-migration followed by a ketol-acid reduction of (S)-2-acetolactate (S2AL) to yield (R)-2,3-dihydroxy-isovalerate. In the isomerase reaction, S2AL is rearranged via a Mg-dependent methyl migration to produce 3-hydroxy-3-methyl-2-ketobutyrate (HMKB). In the reductase reaction, this 2-ketoacid undergoes a metal-dependent reduction by NADPH to yield (R)-2,3-dihydroxy-isovalerate. The polypeptide is Ketol-acid reductoisomerase (NADP(+)) (Ruminiclostridium cellulolyticum (strain ATCC 35319 / DSM 5812 / JCM 6584 / H10) (Clostridium cellulolyticum)).